Reading from the N-terminus, the 144-residue chain is Benzoylsuccinyl-CoA thiolase subunit BbsA (144 aa).

4 residues coordinate Zn(2+): Cys-40, Cys-43, Cys-54, and Cys-57.

The protein belongs to the BbsA family. Heterotetramer composed of two BbsA subunits and two BbsB subunits. BbsA forms homodimeric subcomplexes. Both BbsA and BbsB are essential for enzymatic activity.

The enzyme catalyses (S)-2-benzoylsuccinyl-CoA + CoA = benzoyl-CoA + succinyl-CoA. Its pathway is xenobiotic degradation; toluene degradation. Component of the BbsAB thiolase complex, which catalyzes the thiolytic cleavage of (S)-2-benzoylsuccinyl-CoA to succinyl-CoA and benzoyl-CoA, the final step of anaerobic toluene metabolism. The BbsA subunit critically contributes to an induced-fit process for productive binding of a CoA substrate into the active site of BbsB. The polypeptide is Benzoylsuccinyl-CoA thiolase subunit BbsA (Thauera aromatica).